Reading from the N-terminus, the 114-residue chain is Ribulose bisphosphate carboxylase small subunit 2 (114 aa).

The protein belongs to the RuBisCO small chain family. In terms of assembly, heterohexadecamer of 8 large and 8 small subunits. Forms a CsoS2-CsoS1-RuBisCO complex.

The protein localises to the carboxysome. Functionally, ruBisCO catalyzes two reactions: the carboxylation of D-ribulose 1,5-bisphosphate, the primary event in carbon dioxide fixation, as well as the oxidative fragmentation of the pentose substrate. Both reactions occur simultaneously and in competition at the same active site. Although the small subunit is not catalytic it is essential for maximal activity. In terms of biological role, replacing the endogenous type I ccbLS genes in H.neapolitanus with this carboxysomally targeted enzyme reconstitutes RuBisCO with about 25% of normal activity; the active enzyme is targeted to carboxysomes. The sequence is that of Ribulose bisphosphate carboxylase small subunit 2 from Hydrogenovibrio crunogenus (strain DSM 25203 / XCL-2) (Thiomicrospira crunogena).